Reading from the N-terminus, the 178-residue chain is Ribonuclease M5 (178 aa).

Positions 10–94 (DGVIVCEGKT…YVDMNARLKN (85 aa)) constitute a Toprim domain. Positions 16, 62, and 64 each coordinate Mg(2+).

It belongs to the ribonuclease M5 family. The cofactor is Mg(2+).

Its subcellular location is the cytoplasm. The enzyme catalyses Endonucleolytic cleavage of RNA, removing 21 and 42 nucleotides, respectively, from the 5'- and 3'-termini of a 5S-rRNA precursor.. Its function is as follows. Required for correct processing of both the 5' and 3' ends of 5S rRNA precursor. Cleaves both sides of a double-stranded region yielding mature 5S rRNA in one step. The chain is Ribonuclease M5 (rnmV) from Mycoplasma genitalium (strain ATCC 33530 / DSM 19775 / NCTC 10195 / G37) (Mycoplasmoides genitalium).